Consider the following 556-residue polypeptide: Glucose-6-phosphate isomerase (556 aa).

The active-site Proton donor is glutamate 364. Active-site residues include histidine 395 and lysine 521.

This sequence belongs to the GPI family.

It localises to the cytoplasm. It catalyses the reaction alpha-D-glucose 6-phosphate = beta-D-fructose 6-phosphate. Its pathway is carbohydrate biosynthesis; gluconeogenesis. It functions in the pathway carbohydrate degradation; glycolysis; D-glyceraldehyde 3-phosphate and glycerone phosphate from D-glucose: step 2/4. Its function is as follows. Catalyzes the reversible isomerization of glucose-6-phosphate to fructose-6-phosphate. The chain is Glucose-6-phosphate isomerase from Corynebacterium kroppenstedtii (strain DSM 44385 / JCM 11950 / CIP 105744 / CCUG 35717).